Consider the following 346-residue polypeptide: LRP2-binding protein (346 aa).

The stretch at 58–91 (AMAYFLRGQLYFEEGWYEEALAQFEEIQEKDHQA) is one TPR repeat. 6 Sel1-like repeats span residues 92 to 124 (IYQL…DSSC), 132 to 167 (FAAA…DNGN), 172 to 205 (VKAQ…GNGN), 206 to 241 (LESQ…ERGN), 242 to 276 (VYAQ…EVHD), and 296 to 331 (AMAS…RLNP).

As to quaternary structure, interacts with LRP2.

The protein resides in the cytoplasm. In terms of biological role, may act as an adapter that regulates LRP2 function. The polypeptide is LRP2-binding protein (Lrp2bp) (Rattus norvegicus (Rat)).